A 233-amino-acid polypeptide reads, in one-letter code: Leucyl/phenylalanyl-tRNA--protein transferase (233 aa).

The protein belongs to the L/F-transferase family.

The protein localises to the cytoplasm. The enzyme catalyses N-terminal L-lysyl-[protein] + L-leucyl-tRNA(Leu) = N-terminal L-leucyl-L-lysyl-[protein] + tRNA(Leu) + H(+). It catalyses the reaction N-terminal L-arginyl-[protein] + L-leucyl-tRNA(Leu) = N-terminal L-leucyl-L-arginyl-[protein] + tRNA(Leu) + H(+). It carries out the reaction L-phenylalanyl-tRNA(Phe) + an N-terminal L-alpha-aminoacyl-[protein] = an N-terminal L-phenylalanyl-L-alpha-aminoacyl-[protein] + tRNA(Phe). Functionally, functions in the N-end rule pathway of protein degradation where it conjugates Leu, Phe and, less efficiently, Met from aminoacyl-tRNAs to the N-termini of proteins containing an N-terminal arginine or lysine. This chain is Leucyl/phenylalanyl-tRNA--protein transferase, found in Chromobacterium violaceum (strain ATCC 12472 / DSM 30191 / JCM 1249 / CCUG 213 / NBRC 12614 / NCIMB 9131 / NCTC 9757 / MK).